The sequence spans 158 residues: Anaerobic nitrite reductase AHB2 (158 aa).

Positions 5 to 154 constitute a Globin domain; the sequence is GFTEKQEALV…LALAIKTEMK (150 aa). Positions 38 to 42 match the Homodimerization motif; the sequence is EIAPA. Positions 48, 62, 66, and 101 each coordinate heme b. The short motif at 108 to 120 is the Homodimerization element; it reads DPHFEVVKEALLR.

Belongs to the plant globin family. Unable to dimerize. The cofactor is heme b. In terms of tissue distribution, expressed in rosette leaves but not in roots.

It is found in the cytoplasm. Its subcellular location is the nucleus. The enzyme catalyses Fe(III)-heme b-[protein] + nitric oxide + H2O = Fe(II)-heme b-[protein] + nitrite + 2 H(+). Functionally, phytoglobin that reduces nitrite to nitric oxide (NO) under anoxic conditions (e.g. during flooding or in waterlogged soil). May not function as an oxygen storage or transport protein. Has an unusually high affinity for O(2) through an hexacoordinate heme iron because of a very low dissociation constant. The sequence is that of Anaerobic nitrite reductase AHB2 from Arabidopsis thaliana (Mouse-ear cress).